A 154-amino-acid chain; its full sequence is AP-1 complex subunit sigma-3 (154 aa).

Belongs to the adaptor complexes small subunit family. As to quaternary structure, adaptor protein complex 1 (AP-1) is a heterotetramer composed of two large adaptins (gamma-type subunit AP1G1 and beta-type subunit AP1B1), a medium adaptin (mu-type subunit AP1M1 or AP1M2) and a small adaptin (sigma-type subunit AP1S1 or AP1S2 or AP1S3). Widely expressed.

The protein localises to the golgi apparatus. It is found in the cytoplasmic vesicle membrane. It localises to the membrane. The protein resides in the clathrin-coated pit. Its function is as follows. Subunit of clathrin-associated adaptor protein complex 1 that plays a role in protein sorting in the late-Golgi/trans-Golgi network (TGN) and/or endosomes. The AP complexes mediate both the recruitment of clathrin to membranes and the recognition of sorting signals within the cytosolic tails of transmembrane cargo molecules. Involved in TLR3 trafficking. This chain is AP-1 complex subunit sigma-3 (AP1S3), found in Homo sapiens (Human).